Consider the following 156-residue polypeptide: Inorganic triphosphatase (156 aa).

Residues 2–148 (GKEIEKKFIV…PRYLNSNLVK (147 aa)) enclose the CYTH domain. Tyr-29 (proton acceptor) is an active-site residue.

In terms of assembly, homodimer.

The catalysed reaction is triphosphate + H2O = phosphate + diphosphate. The enzyme catalyses ATP + H2O = ADP + phosphate + H(+). Functionally, involved in the hydrolysis of the beta-gamma-phosphoanhydride linkage of triphosphate-containing substrates (inorganic or nucleoside-linked). Catalyzes vigorously the hydrolysis of inorganic triphosphate (PPPi), however it can also catalyze the hydrolysis of ATP to ADP and phosphate. It can use ribonucleotides such as GTP, CTP, or UTP and deoxynucleotides such as dATP, dGTP, dCTP, and dTTP. The chain is Inorganic triphosphatase from Acetivibrio thermocellus (strain ATCC 27405 / DSM 1237 / JCM 9322 / NBRC 103400 / NCIMB 10682 / NRRL B-4536 / VPI 7372) (Clostridium thermocellum).